The chain runs to 384 residues: MDEGIRASGGIRACQTGKQKQGRKRPVTGKKRIVVGMSGGVDSSVTAWLLKQQGHEVIGVFMQNWEDDNDDEYCSIKQDALDAMSVADIVGIDMEIVNFAKEYKDRVFSYFLKEYSAGRTPNPDVLCNAEIKFKAFLDYAMELGADCIATGHYARKLEQDGTHYLMKAVDHTKDQSYFLYRLQQHQLAKAIFPLGDIRKTEVRRLAEEAGLPTAAKKDSTGICFIGERPFREFLQRYLPTSPGQMVTPDGKVVGEHIGLMYYTLGQRKGLTIGGSRDGNGEPWFVAGKDIPGNKLIVVQGHDHPLLLKPTLSMADLSWTLPDAPAPGEYSAKNRYRMADAACTLSPIVDGQASLTFQEKQWAVTPGQSAVLYHGDICLGGGIIQ.

Positions 1-26 (MDEGIRASGGIRACQTGKQKQGRKRP) are disordered. ATP contacts are provided by residues 36–43 (GMSGGVDS) and M62. The interaction with target base in tRNA stretch occupies residues 122-124 (NPD). Residue C127 is the Nucleophile of the active site. Residues C127 and C223 are joined by a disulfide bond. Residue G151 participates in ATP binding. The segment at 173–175 (KDQ) is interaction with tRNA. C223 (cysteine persulfide intermediate) is an active-site residue. The segment at 334–335 (RY) is interaction with tRNA.

This sequence belongs to the MnmA/TRMU family.

The protein resides in the cytoplasm. The catalysed reaction is S-sulfanyl-L-cysteinyl-[protein] + uridine(34) in tRNA + AH2 + ATP = 2-thiouridine(34) in tRNA + L-cysteinyl-[protein] + A + AMP + diphosphate + H(+). Catalyzes the 2-thiolation of uridine at the wobble position (U34) of tRNA, leading to the formation of s(2)U34. This is tRNA-specific 2-thiouridylase MnmA from Chromobacterium violaceum (strain ATCC 12472 / DSM 30191 / JCM 1249 / CCUG 213 / NBRC 12614 / NCIMB 9131 / NCTC 9757 / MK).